We begin with the raw amino-acid sequence, 544 residues long: Probable protein kinase UbiB (544 aa).

One can recognise a Protein kinase domain in the interval 123 to 501; that stretch reads EFDIKPLASA…KRQQATGKFL (379 aa). Residues 129–137 and K152 each bind ATP; that span reads LASASIAQV. D287 serves as the catalytic Proton acceptor. Helical transmembrane passes span 496–516 and 519–539; these read ATGK…AILV and AYEQ…LLSW.

This sequence belongs to the ABC1 family. UbiB subfamily.

Its subcellular location is the cell inner membrane. It participates in cofactor biosynthesis; ubiquinone biosynthesis [regulation]. In terms of biological role, is probably a protein kinase regulator of UbiI activity which is involved in aerobic coenzyme Q (ubiquinone) biosynthesis. The protein is Probable protein kinase UbiB of Vibrio campbellii (strain ATCC BAA-1116).